Here is a 266-residue protein sequence, read N- to C-terminus: Probable metal transport system membrane protein TP_0036 (266 aa).

Helical transmembrane passes span 10-30, 34-54, 56-76, 88-108, 120-140, 172-192, 211-231, and 238-258; these read AFVA…HLVL, ALMG…AVSC, IHPG…IEFL, LSIV…SGLI, ILVV…FCVG, VASV…GILV, FLLT…LGLV, and VAPG…VIAL.

This sequence belongs to the ABC-3 integral membrane protein family.

It localises to the cell inner membrane. Part of an ATP-driven transport system TP_0034/TP_0035/TP_0036 for a metal. In Treponema pallidum (strain Nichols), this protein is Probable metal transport system membrane protein TP_0036.